Consider the following 1726-residue polypeptide: Probable serine/threonine-protein kinase roco4 (1726 aa).

LRR repeat units follow at residues 256 to 277 (KGKR…ITQM), 280 to 301 (HLVE…IQLL), 303 to 324 (SLRI…ICYL), and 326 to 347 (DLKI…VVQS). Residues 364–544 (KSETWNKVKL…KRLIHEAEKS (181 aa)) enclose the Roc domain. GTP contacts are provided by residues 377-384 (GQEGVGKT), 428-432 (DFGGQ), and 487-490 (THSD). The 197-residue stretch at 591–787 (AINSQKERYI…RTYWRNGVLL (197 aa)) folds into the COR domain. The span at 800 to 881 (SKQQQLQQQQ…STLNSQQLIN (82 aa)) shows a compositional bias: low complexity. The tract at residues 800-890 (SKQQQLQQQQ…NPSVSPLSST (91 aa)) is disordered. The region spanning 1026–1292 (IEYEKQIGKG…SYIVKELSEL (267 aa)) is the Protein kinase domain. Residues 1032–1040 (IGKGGFGLV) and K1055 contribute to the ATP site. D1154 functions as the Proton acceptor in the catalytic mechanism. The segment covering 1319 to 1331 (ASTSSNADDGSQT) has biased composition (polar residues). The interval 1319 to 1385 (ASTSSNADDG…SSPSTSFINS (67 aa)) is disordered. Over residues 1332–1348 (NNNNNNNNNNNNNNNNN) the composition is skewed to low complexity. Polar residues predominate over residues 1349–1364 (SGSSIALSPSRSFEQQ). Positions 1365 to 1381 (TTTTTTTTTSPSSPSTS) are enriched in low complexity. 6 WD repeats span residues 1422-1461 (SVHK…LINE), 1463-1502 (KCPH…IVQQ), 1506-1546 (PHKG…KKHS), 1589-1627 (KHST…ELQK), 1633-1670 (AHHE…KPFT), and 1674-1714 (HHKQ…EKKT).

Belongs to the protein kinase superfamily. TKL Ser/Thr protein kinase family. ROCO subfamily.

It carries out the reaction L-seryl-[protein] + ATP = O-phospho-L-seryl-[protein] + ADP + H(+). The catalysed reaction is L-threonyl-[protein] + ATP = O-phospho-L-threonyl-[protein] + ADP + H(+). The protein is Probable serine/threonine-protein kinase roco4 (roco4) of Dictyostelium discoideum (Social amoeba).